A 233-amino-acid chain; its full sequence is Nickel import system ATP-binding protein NikE (233 aa).

An ABC transporter domain is found at 2–228 (IELKHVTFGY…DRHPYTKELV (227 aa)). 35 to 42 (GESGCGKS) contributes to the ATP binding site.

It belongs to the ABC transporter superfamily. The complex is composed of two ATP-binding proteins (NikD and NikE), two transmembrane proteins (NikB and NikC) and a solute-binding protein (NikA).

It is found in the cell membrane. The catalysed reaction is Ni(2+)(out) + ATP + H2O = Ni(2+)(in) + ADP + phosphate + H(+). In terms of biological role, part of the ABC transporter complex NikABCDE (Opp2) involved in nickel import. Probably responsible for energy coupling to the transport system. The polypeptide is Nickel import system ATP-binding protein NikE (Staphylococcus aureus (strain Mu50 / ATCC 700699)).